Here is a 393-residue protein sequence, read N- to C-terminus: SEC12-like protein 2 (393 aa).

A2 is subject to N-acetylalanine. The Cytoplasmic segment spans residues 2–367 (ANQSTETNQP…EQKGDKPGVR (366 aa)). Positions 41–67 (EKSEDDDESSSSSSSSRSCIVLSGGGG) are disordered. S43 is modified (phosphoserine). WD repeat units follow at residues 151–190 (RDVGQQLALAFNPEGSVLAAGAEDGTLRVFKWPSMNTLLN), 193–231 (QAHSSVKCLTFSESGQFLVSLGGPVCRVWDVNASAAVAS), 283–322 (IKKNSISAFNVSADGKLLAIGTLEGDVLILESTRMQTIQV), and 326–367 (AHLG…PGVR). A helical; Signal-anchor for type II membrane protein membrane pass occupies residues 368–388 (WWLLVLLIVLLYVVAYYYMKA). The Lumenal segment spans residues 389 to 393 (KGIIP).

As to quaternary structure, interacts with BZIP28.

The protein resides in the endoplasmic reticulum membrane. It is found in the golgi apparatus. It localises to the cis-Golgi network membrane. Required for the formation or budding of transport vesicles from the ER. The sequence is that of SEC12-like protein 2 (STL2P) from Arabidopsis thaliana (Mouse-ear cress).